The chain runs to 118 residues: Putative pterin-4-alpha-carbinolamine dehydratase (118 aa).

The protein belongs to the pterin-4-alpha-carbinolamine dehydratase family.

The catalysed reaction is (4aS,6R)-4a-hydroxy-L-erythro-5,6,7,8-tetrahydrobiopterin = (6R)-L-erythro-6,7-dihydrobiopterin + H2O. In Pseudomonas aeruginosa (strain LESB58), this protein is Putative pterin-4-alpha-carbinolamine dehydratase.